Reading from the N-terminus, the 132-residue chain is Transthyretin-like protein 16 (132 aa).

Positions 1 to 19 (MRSLVVCLLLAACALECTA) are cleaved as a signal peptide. An N-linked (GlcNAc...) asparagine glycan is attached at asparagine 23.

Belongs to the nematode transthyretin-like family.

The protein localises to the secreted. The sequence is that of Transthyretin-like protein 16 (ttr-16) from Caenorhabditis elegans.